The following is a 190-amino-acid chain: UPF0200 protein MTH_434 (190 aa).

Gly10–Gly17 provides a ligand contact to ATP.

This sequence belongs to the UPF0200 family.

This is UPF0200 protein MTH_434 from Methanothermobacter thermautotrophicus (strain ATCC 29096 / DSM 1053 / JCM 10044 / NBRC 100330 / Delta H) (Methanobacterium thermoautotrophicum).